Reading from the N-terminus, the 930-residue chain is Translation initiation factor IF-2 (930 aa).

The interval 27–342 (LGLDVKSHSS…APKPVTERKF (316 aa)) is disordered. Positions 52 to 103 (KAAAPQAPAEKPVAAQPSPQKTPAKEAAPVKAEPTEAKAAAQPEAKTETAAP) are enriched in low complexity. Composition is skewed to basic and acidic residues over residues 112–128 (FKAE…ERRK) and 136–178 (QNKE…DGRR). Residues 183 to 195 (HQGFNGQKRQQPQ) are compositionally biased toward polar residues. The segment covering 218-245 (RSSEERFKQAQEAKEVMERQNRRKEQPK) has biased composition (basic and acidic residues). Positions 251 to 268 (PVQPAPAPSAPAANPSPA) are enriched in pro residues. A compositionally biased stretch (basic and acidic residues) spans 280 to 297 (ARPDKKRDDFDREEEGPR). Residues 302–318 (NRSSQNQVRNQRNSNWN) show a composition bias toward low complexity. One can recognise a tr-type G domain in the interval 432-599 (ERPPVVTIMG…TVLLVAEIQE (168 aa)). A G1 region spans residues 441 to 448 (GHVDHGKT). GTP is bound at residue 441–448 (GHVDHGKT). Residues 466–470 (GITQH) are G2. Positions 487-490 (DTPG) are G3. GTP contacts are provided by residues 487-491 (DTPGH) and 541-544 (NKID). Residues 541 to 544 (NKID) are G4. Positions 577–579 (SAK) are G5.

The protein belongs to the TRAFAC class translation factor GTPase superfamily. Classic translation factor GTPase family. IF-2 subfamily.

The protein resides in the cytoplasm. In terms of biological role, one of the essential components for the initiation of protein synthesis. Protects formylmethionyl-tRNA from spontaneous hydrolysis and promotes its binding to the 30S ribosomal subunits. Also involved in the hydrolysis of GTP during the formation of the 70S ribosomal complex. The chain is Translation initiation factor IF-2 from Streptococcus sanguinis (strain SK36).